A 312-amino-acid polypeptide reads, in one-letter code: DNA-directed RNA polymerase subunit alpha (312 aa).

The alpha N-terminal domain (alpha-NTD) stretch occupies residues 1-229 (MLQYQIDRIE…ELFQPLATVT (229 aa)). The tract at residues 239 to 312 (EPTAEAQIPL…IQIPQSRTSA (74 aa)) is alpha C-terminal domain (alpha-CTD).

The protein belongs to the RNA polymerase alpha chain family. In terms of assembly, in cyanobacteria the RNAP catalytic core is composed of 2 alpha, 1 beta, 1 beta', 1 gamma and 1 omega subunit. When a sigma factor is associated with the core the holoenzyme is formed, which can initiate transcription.

The catalysed reaction is RNA(n) + a ribonucleoside 5'-triphosphate = RNA(n+1) + diphosphate. In terms of biological role, DNA-dependent RNA polymerase catalyzes the transcription of DNA into RNA using the four ribonucleoside triphosphates as substrates. This Synechococcus sp. (strain WH7803) protein is DNA-directed RNA polymerase subunit alpha.